A 655-amino-acid chain; its full sequence is uncharacterized protein (655 aa).

The N-terminal stretch at 1 to 23 is a signal peptide; it reads MKRTIKYLSFLGLIPFLSITTIS. The N-palmitoyl cysteine moiety is linked to residue cysteine 24. Cysteine 24 is lipidated: S-diacylglycerol cysteine.

This sequence belongs to the MG067/MG068/MG395 family.

It localises to the cell membrane. This is an uncharacterized protein from Mycoplasma capricolum subsp. capricolum (strain California kid / ATCC 27343 / NCTC 10154).